A 154-amino-acid polypeptide reads, in one-letter code: Acidic phospholipase A2 2 (154 aa).

An N-terminal signal peptide occupies residues 1-19 (MHPAHLLVPLGVCVSLLGA). The propeptide occupies 20 to 27 (ARIPPLPL). Disulfide bonds link Cys38-Cys104, Cys54-Cys153, Cys56-Cys72, Cys71-Cys132, Cys78-Cys125, Cys88-Cys118, and Cys111-Cys123. Positions 55, 57, and 59 each coordinate Ca(2+). His75 is a catalytic residue. Ca(2+) is bound at residue Asp76. Asp126 is a catalytic residue.

This sequence belongs to the phospholipase A2 family. Group I subfamily. D49 sub-subfamily. Monomer. Ca(2+) serves as cofactor. Expressed by the venom gland.

The protein resides in the secreted. The enzyme catalyses a 1,2-diacyl-sn-glycero-3-phosphocholine + H2O = a 1-acyl-sn-glycero-3-phosphocholine + a fatty acid + H(+). Snake venom phospholipase A2 (PLA2) that shows moderate enzymatic activity and exhibits procoagulant activity. PLA2 catalyzes the calcium-dependent hydrolysis of the 2-acyl groups in 3-sn-phosphoglycerides. This Pseudonaja textilis (Eastern brown snake) protein is Acidic phospholipase A2 2.